Consider the following 281-residue polypeptide: HTH-type transcriptional activator RamA (281 aa).

Residues 213–278 enclose the HTH luxR-type domain; sequence RIKQTTKLSA…EAVNAARRIG (66 aa).

Its function is as follows. RamA is a master regulator of acetate metabolism. It positively controls the expression of acnA, aceA, aceB, ack, pta and ramB genes in the presence of acetate. RamA is also a positive regulator of rpf2 gene expression during growth on glucose as the sole carbon source. The protein is HTH-type transcriptional activator RamA of Corynebacterium glutamicum (strain ATCC 13032 / DSM 20300 / JCM 1318 / BCRC 11384 / CCUG 27702 / LMG 3730 / NBRC 12168 / NCIMB 10025 / NRRL B-2784 / 534).